Here is a 233-residue protein sequence, read N- to C-terminus: Adenosine 5'-phosphosulfate reductase (233 aa).

[4Fe-4S] cluster-binding residues include C120, C121, C203, and C206. Catalysis depends on C229, which acts as the Nucleophile; cysteine thiosulfonate intermediate.

It belongs to the PAPS reductase family. CysH subfamily. Requires [4Fe-4S] cluster as cofactor.

Its subcellular location is the cytoplasm. It carries out the reaction [thioredoxin]-disulfide + sulfite + AMP + 2 H(+) = adenosine 5'-phosphosulfate + [thioredoxin]-dithiol. The protein operates within sulfur metabolism; hydrogen sulfide biosynthesis; sulfite from sulfate. Functionally, catalyzes the formation of sulfite from adenosine 5'-phosphosulfate (APS) using thioredoxin as an electron donor. The chain is Adenosine 5'-phosphosulfate reductase from Lysinibacillus sphaericus (strain C3-41).